We begin with the raw amino-acid sequence, 506 residues long: tRNA-2-methylthio-N(6)-dimethylallyladenosine synthase (506 aa).

The 119-residue stretch at 14–132 folds into the MTTase N-terminal domain; it reads KSYEVRTYGC…LPVLLERARV (119 aa). Residues Cys23, Cys61, Cys95, Cys169, Cys173, and Cys176 each contribute to the [4Fe-4S] cluster site. Residues 155–386 form the Radical SAM core domain; the sequence is RESAYAAWVS…ALQEQISWDE (232 aa). A TRAM domain is found at 388-456; it reads KKQVGRTLDV…PHHLLAEGTP (69 aa).

It belongs to the methylthiotransferase family. MiaB subfamily. Monomer. The cofactor is [4Fe-4S] cluster.

The protein resides in the cytoplasm. It carries out the reaction N(6)-dimethylallyladenosine(37) in tRNA + (sulfur carrier)-SH + AH2 + 2 S-adenosyl-L-methionine = 2-methylsulfanyl-N(6)-dimethylallyladenosine(37) in tRNA + (sulfur carrier)-H + 5'-deoxyadenosine + L-methionine + A + S-adenosyl-L-homocysteine + 2 H(+). Catalyzes the methylthiolation of N6-(dimethylallyl)adenosine (i(6)A), leading to the formation of 2-methylthio-N6-(dimethylallyl)adenosine (ms(2)i(6)A) at position 37 in tRNAs that read codons beginning with uridine. The chain is tRNA-2-methylthio-N(6)-dimethylallyladenosine synthase from Streptomyces griseus subsp. griseus (strain JCM 4626 / CBS 651.72 / NBRC 13350 / KCC S-0626 / ISP 5235).